The chain runs to 270 residues: Putative pyruvate, phosphate dikinase regulatory protein (270 aa).

153-160 (GVSRTSKT) provides a ligand contact to ADP.

It belongs to the pyruvate, phosphate/water dikinase regulatory protein family. PDRP subfamily.

The catalysed reaction is N(tele)-phospho-L-histidyl/L-threonyl-[pyruvate, phosphate dikinase] + ADP = N(tele)-phospho-L-histidyl/O-phospho-L-threonyl-[pyruvate, phosphate dikinase] + AMP + H(+). It catalyses the reaction N(tele)-phospho-L-histidyl/O-phospho-L-threonyl-[pyruvate, phosphate dikinase] + phosphate + H(+) = N(tele)-phospho-L-histidyl/L-threonyl-[pyruvate, phosphate dikinase] + diphosphate. Its function is as follows. Bifunctional serine/threonine kinase and phosphorylase involved in the regulation of the pyruvate, phosphate dikinase (PPDK) by catalyzing its phosphorylation/dephosphorylation. The chain is Putative pyruvate, phosphate dikinase regulatory protein from Halalkalibacterium halodurans (strain ATCC BAA-125 / DSM 18197 / FERM 7344 / JCM 9153 / C-125) (Bacillus halodurans).